A 331-amino-acid polypeptide reads, in one-letter code: tRNA N6-adenosine threonylcarbamoyltransferase (331 aa).

3 residues coordinate a divalent metal cation: histidine 108, histidine 112, and tyrosine 129. Substrate is bound by residues 129-133 (YASGG), aspartate 161, glycine 176, glutamate 180, and asparagine 261. Residue aspartate 289 participates in a divalent metal cation binding.

The protein belongs to the KAE1 / TsaD family. Component of the EKC/KEOPS complex composed of at least BUD32, CGI121, GON7, KAE1 and PCC1; the whole complex dimerizes. The cofactor is a divalent metal cation.

The protein localises to the cytoplasm. Its subcellular location is the nucleus. It catalyses the reaction L-threonylcarbamoyladenylate + adenosine(37) in tRNA = N(6)-L-threonylcarbamoyladenosine(37) in tRNA + AMP + H(+). Functionally, component of the EKC/KEOPS complex that is required for the formation of a threonylcarbamoyl group on adenosine at position 37 (t(6)A37) in tRNAs that read codons beginning with adenine. The complex is probably involved in the transfer of the threonylcarbamoyl moiety of threonylcarbamoyl-AMP (TC-AMP) to the N6 group of A37. KAE1 likely plays a direct catalytic role in this reaction, but requires other protein(s) of the complex to fulfill this activity. The EKC/KEOPS complex also promotes both telomere uncapping and telomere elongation. The complex is required for efficient recruitment of transcriptional coactivators. In Encephalitozoon cuniculi (strain GB-M1) (Microsporidian parasite), this protein is tRNA N6-adenosine threonylcarbamoyltransferase.